A 666-amino-acid chain; its full sequence is MSLGPMGMNTGFDINGMVSKIVSAERVPKQQRIDNERTNIDTSISAYGRLRESLDTMKNLMTQFRQEKAFAVRKVDTSNEQVVSATATTEAIAGNYSVDVLQLAQSHKIASEVLDKDAKFGPGKLHISLGDKSFTLDVQGNSKLVDIVRGINGEKSNPGVRASIINDVEGPRLIVASNVSGKDHSVKMSAQAEPGNPLKQLEYKTLEQRVRDLEKARAQAQQLIAPLTPEQQKVAAKVAEKIGDAARLVDQEVAQEIRSAAQSAQGAAGEALNAGELTESAVKAAANAASEAKKYIRPEDRIPGWTETASGTLLDSYWEPEEELDAQGQKKAADVPGWSNTASGTLLDSYVTPQEAQQKLEQKLAQEKAQIEAAIRSGKMTPEEAKAQARAKLSPEERAYIEQVEKAQAALNAAQSAFDGYGGMTEVQSAQDSMVVLDGVATLSSNNNIIENAIEGVNLTLKGKTDRNQPPAEIGIEYDRERVRNDIEQFVAAYNQFFQTSKELAGVDPRTGQAGPLAGDSIVRSADSRLKTVFSSSIEQAPENLKSLTEFGITTTRQGTLEINYAMLDRQLNNNFTKLGEFFGGNQGFAKRVEDAISSMTGVTGSIRTREKSLNEQTYRLDDDQRSLDRRMESLEKRTHAKFSAMQDATSKMQSQLAGMMNALGG.

A coiled-coil region spans residues Gln354–Asp419.

Belongs to the FliD family. In terms of assembly, homopentamer.

It localises to the secreted. The protein resides in the bacterial flagellum. Its function is as follows. Required for the morphogenesis and for the elongation of the flagellar filament by facilitating polymerization of the flagellin monomers at the tip of growing filament. Forms a capping structure, which prevents flagellin subunits (transported through the central channel of the flagellum) from leaking out without polymerization at the distal end. This chain is Flagellar hook-associated protein 2 (fliD), found in Vibrio cholerae serotype O1 (strain ATCC 39315 / El Tor Inaba N16961).